Reading from the N-terminus, the 231-residue chain is Flagellar L-ring protein (231 aa).

A signal peptide spans 1-18; that stretch reads MNRLLSLFALGGAVLLAG. A lipid anchor (N-palmitoyl cysteine) is attached at Cys-19. Cys-19 carries S-diacylglycerol cysteine lipidation.

This sequence belongs to the FlgH family. As to quaternary structure, the basal body constitutes a major portion of the flagellar organelle and consists of four rings (L,P,S, and M) mounted on a central rod.

It localises to the cell outer membrane. It is found in the bacterial flagellum basal body. Its function is as follows. Assembles around the rod to form the L-ring and probably protects the motor/basal body from shearing forces during rotation. In Pseudomonas putida (strain W619), this protein is Flagellar L-ring protein.